An 84-amino-acid chain; its full sequence is Cell division topological specificity factor (84 aa).

It belongs to the MinE family.

In terms of biological role, prevents the cell division inhibition by proteins MinC and MinD at internal division sites while permitting inhibition at polar sites. This ensures cell division at the proper site by restricting the formation of a division septum at the midpoint of the long axis of the cell. The chain is Cell division topological specificity factor from Paraburkholderia xenovorans (strain LB400).